Consider the following 167-residue polypeptide: Ribosome maturation factor RimM (167 aa).

The 72-residue stretch at 94–165 (ENEFYYSDII…KIIITPMEGL (72 aa)) folds into the PRC barrel domain.

Belongs to the RimM family. Binds ribosomal protein uS19.

It localises to the cytoplasm. Its function is as follows. An accessory protein needed during the final step in the assembly of 30S ribosomal subunit, possibly for assembly of the head region. Essential for efficient processing of 16S rRNA. May be needed both before and after RbfA during the maturation of 16S rRNA. It has affinity for free ribosomal 30S subunits but not for 70S ribosomes. This is Ribosome maturation factor RimM from Staphylococcus aureus (strain NCTC 8325 / PS 47).